Consider the following 128-residue polypeptide: uncharacterized protein (128 aa).

The cysteines at positions 10 and 13 are disulfide-linked.

It belongs to the ArsC family.

This is an uncharacterized protein from Ureaplasma parvum serovar 3 (strain ATCC 700970).